The chain runs to 1184 residues: von Willebrand factor A domain-containing protein 3A (1184 aa).

An N-terminal signal peptide occupies residues 1 to 24 (MKKYRKISIGCFAMATQTSHVFHG). The tract at residues 40–62 (GRDSKKPLKQKNMNGLGQNSDNG) is disordered. Over residues 50–62 (KNMNGLGQNSDNG) the composition is skewed to polar residues. Residues 333-357 (TSRDMDELLAEIQKAQSLLSHVQAL) adopt a coiled-coil conformation. The region spanning 511–708 (RVVVLLDISA…SIMSEMEKAL (198 aa)) is the VWFA 1 domain. N-linked (GlcNAc...) asparagine glycosylation is present at Asn-709. Residues 729–780 (LGSSALPKEKPKTLQLRSQPKKLCPPRPTVPLGARMSIKDDPDREKSPPLKS) form a disordered region. Residues 765–776 (SIKDDPDREKSP) are compositionally biased toward basic and acidic residues. The 173-residue stretch at 959 to 1131 (KVCILLDTSG…KIHSLLTKGF (173 aa)) folds into the VWFA 2 domain.

It is found in the secreted. The sequence is that of von Willebrand factor A domain-containing protein 3A (VWA3A) from Homo sapiens (Human).